The chain runs to 549 residues: MFWLCLVCLSVSHKMIGLCYLLVAILSGFVGYVYSLFIRLELSLIGCGILFGDYQFYNVLITSHGLIMVFAFIMPVMMGGLVNYFIPVMAGFPDMVFPRLNNMSFWMYLAGFGCVVNGFLTEEGMGVGWTLYPTLICIDFHSSLACDFVMFAVHLLGISSILNSINLLGTLFCCRRKFFSFLSWSLFIWAALITAILLIITLPVLAGGVTLILCDRNFNTSFYDVVGGGDLILFQHIFWFFGHPEVYIILLPVFGLISTIVEVIGFRCVFSTVAMIYSMILIAILGMFVWAHHMFVVGMDVDSRAYFGGVSILIGLPTCVKLFNWIYSFLYTDMIITFEVYFVIMFIFMFLIGAVTGLFLSNVGIDIMLHDTYFVVGHFHYVLSLGAVVGFFTGFIHFLAKWLPIELYLFWMFYFISTLFIGSNMLFFPMHSLGMYAFPRRISDYPVSFLFWSSFMLYGMLLLASLILFLCALFCVFLFWDYCLFFVSLFVFSLYCFFYFSTWLPCVMVLYLLLVDFAHIVLDYLFLILCFCFVFFIFFWQSLFLFFYI.

Residues 18–38 (LCYLLVAILSGFVGYVYSLFI) form a helical membrane-spanning segment. Glu-41 and Gly-46 together coordinate Ca(2+). A helical transmembrane segment spans residues 42–62 (LSLIGCGILFGDYQFYNVLIT). His-64 lines the Fe(II)-heme a pocket. Transmembrane regions (helical) follow at residues 66 to 86 (LIMV…NYFI), 100 to 120 (LNNM…NGFL), 148 to 168 (FVMF…INLL), 186 to 206 (LFIW…PVLA), and 222 to 242 (FYDV…WFFG). His-243 serves as a coordination point for Cu cation. The 1'-histidyl-3'-tyrosine (His-Tyr) cross-link spans 243–247 (HPEVY). Helical transmembrane passes span 246–266 (VYII…VIGF) and 269–289 (VFST…GMFV). O2 is bound at residue Tyr-247. Residues His-292 and His-293 each contribute to the Cu cation site. Transmembrane regions (helical) follow at residues 306–326 (YFGG…FNWI) and 340–360 (VYFV…GLFL). Mg(2+) contacts are provided by His-370 and Asp-371. His-378 is a binding site for heme a3. The next 5 helical transmembrane spans lie at 379 to 399 (FHYV…IHFL), 402 to 422 (WLPI…LFIG), 460 to 480 (MLLL…FLFW), 484 to 504 (LFFV…STWL), and 520 to 540 (IVLD…IFFW). His-380 lines the Fe(II)-heme a pocket.

The protein belongs to the heme-copper respiratory oxidase family. In terms of assembly, component of the cytochrome c oxidase (complex IV, CIV), a multisubunit enzyme composed of a catalytic core of 3 subunits and several supernumerary subunits. The complex exists as a monomer or a dimer and forms supercomplexes (SCs) in the inner mitochondrial membrane with ubiquinol-cytochrome c oxidoreductase (cytochrome b-c1 complex, complex III, CIII). It depends on heme as a cofactor. Requires Cu cation as cofactor.

The protein localises to the mitochondrion inner membrane. The catalysed reaction is 4 Fe(II)-[cytochrome c] + O2 + 8 H(+)(in) = 4 Fe(III)-[cytochrome c] + 2 H2O + 4 H(+)(out). It functions in the pathway energy metabolism; oxidative phosphorylation. In terms of biological role, component of the cytochrome c oxidase, the last enzyme in the mitochondrial electron transport chain which drives oxidative phosphorylation. The respiratory chain contains 3 multisubunit complexes succinate dehydrogenase (complex II, CII), ubiquinol-cytochrome c oxidoreductase (cytochrome b-c1 complex, complex III, CIII) and cytochrome c oxidase (complex IV, CIV), that cooperate to transfer electrons derived from NADH and succinate to molecular oxygen, creating an electrochemical gradient over the inner membrane that drives transmembrane transport and the ATP synthase. Cytochrome c oxidase is the component of the respiratory chain that catalyzes the reduction of oxygen to water. Electrons originating from reduced cytochrome c in the intermembrane space (IMS) are transferred via the dinuclear copper A center (CU(A)) of subunit 2 and heme A of subunit 1 to the active site in subunit 1, a binuclear center (BNC) formed by heme A3 and copper B (CU(B)). The BNC reduces molecular oxygen to 2 water molecules using 4 electrons from cytochrome c in the IMS and 4 protons from the mitochondrial matrix. This Leishmania tarentolae (Sauroleishmania tarentolae) protein is Cytochrome c oxidase subunit 1 (COI).